The sequence spans 424 residues: UPF0415 protein C7orf25 homolog (424 aa).

It belongs to the UPF0415 family.

The protein is UPF0415 protein C7orf25 homolog of Xenopus tropicalis (Western clawed frog).